A 962-amino-acid polypeptide reads, in one-letter code: Translation initiation factor IF-2 (962 aa).

The segment covering 52–77 has biased composition (basic and acidic residues); the sequence is RSHGQADDSSRKKITLTKRETSEIRQ. Disordered regions lie at residues 52-87 and 121-378; these read RSHG…TRTV and AVEE…EPVV. The segment covering 78-87 has biased composition (polar residues); that stretch reads SDGTGKTRTV. 3 stretches are compositionally biased toward basic and acidic residues: residues 123 to 183, 197 to 250, and 267 to 278; these read EEAR…KAEE, DSSR…EAEA, and PSERKAEEKKAE. Residues 342 to 355 show a composition bias toward gly residues; that stretch reads TSGGVGGWRGGPRG. A tr-type G domain is found at 462-631; the sequence is PRPPVVTVMG…LLQAEVLELT (170 aa). The interval 471–478 is G1; the sequence is GHVDHGKT. 471–478 provides a ligand contact to GTP; the sequence is GHVDHGKT. Residues 496–500 are G2; the sequence is GITQH. Positions 517–520 are G3; sequence DTPG. GTP is bound by residues 517-521 and 571-574; these read DTPGH and NKID. The interval 571-574 is G4; that stretch reads NKID. Positions 607–609 are G5; the sequence is SAK.

Belongs to the TRAFAC class translation factor GTPase superfamily. Classic translation factor GTPase family. IF-2 subfamily.

The protein localises to the cytoplasm. One of the essential components for the initiation of protein synthesis. Protects formylmethionyl-tRNA from spontaneous hydrolysis and promotes its binding to the 30S ribosomal subunits. Also involved in the hydrolysis of GTP during the formation of the 70S ribosomal complex. The protein is Translation initiation factor IF-2 of Cupriavidus necator (strain ATCC 17699 / DSM 428 / KCTC 22496 / NCIMB 10442 / H16 / Stanier 337) (Ralstonia eutropha).